The primary structure comprises 330 residues: Olfactory receptor 1P1 (330 aa).

The Extracellular segment spans residues 1 to 39; it reads MGLTQDFFPPTSELLEGGNQTSTFEFLLWGLSDQPQQQH. N-linked (GlcNAc...) asparagine glycosylation is present at Asn-19. The helical transmembrane segment at 40–60 threads the bilayer; it reads IFFLLFLWMYVVTVAGNLLIV. Residues 61 to 71 are Cytoplasmic-facing; it reads LAIGTDTHLHT. Residues 72 to 92 form a helical membrane-spanning segment; sequence PMYFFLASLSCADIFSTSTTV. The Extracellular portion of the chain corresponds to 93-111; sequence PKALVNIQTQSRSISYAGC. A disulfide bridge connects residues Cys-111 and Cys-192. Residues 112 to 132 traverse the membrane as a helical segment; that stretch reads LAQLYFFLTFGDMDIFLPATM. Topologically, residues 133–137 are cytoplasmic; sequence AYDRY. A helical membrane pass occupies residues 138-158; it reads VAICHLLHYMMIMSLHRCAFL. Topologically, residues 159 to 209 are extracellular; that stretch reads VTACWTLTSLLAMTRTFLIFRLSLCSKILPGFFCDLGPLMKVSCSDAQVNE. Residues 210 to 230 form a helical membrane-spanning segment; sequence LVLLFLGGAVILIPFMLILVS. Topologically, residues 231 to 257 are cytoplasmic; it reads YIRIVSAILRAPSAQGRRKAFSTCDSH. The chain crosses the membrane as a helical span at residues 258-278; the sequence is LVVVALFFGTVIRAYLCPSSS. The Extracellular portion of the chain corresponds to 279-286; it reads SSNSVKED. Residues 287 to 307 traverse the membrane as a helical segment; it reads TAAAVMYTVVTPLLNPFIYSM. Residues 308-330 are Cytoplasmic-facing; it reads RNKDMKAAVVRLLKGRVSFSQGQ.

This sequence belongs to the G-protein coupled receptor 1 family.

Its subcellular location is the cell membrane. Its function is as follows. Odorant receptor. The polypeptide is Olfactory receptor 1P1 (OR1P1) (Homo sapiens (Human)).